The primary structure comprises 327 residues: Zinc transport protein ZntB (327 aa).

The Cytoplasmic portion of the chain corresponds to 1–273; it reads MEAIKGSDVN…ARRTYTMSLM (273 aa). A helical membrane pass occupies residues 274–294; sequence AMVFLPSTFLTGLFGVNLGGI. At 295 to 300 the chain is on the periplasmic side; it reads PGGGWQ. A helical membrane pass occupies residues 301–321; that stretch reads FGFSIFCILLVVLIGGVALWL. Topologically, residues 322–327 are cytoplasmic; the sequence is HRSKWL.

The protein belongs to the CorA metal ion transporter (MIT) (TC 1.A.35) family.

It is found in the cell inner membrane. The catalysed reaction is Zn(2+)(out) + H(+)(out) = Zn(2+)(in) + H(+)(in). Zinc transporter. Acts as a Zn(2+):proton symporter, which likely mediates zinc ion uptake. This Escherichia coli O6:K15:H31 (strain 536 / UPEC) protein is Zinc transport protein ZntB.